Consider the following 187-residue polypeptide: Orotate phosphoribosyltransferase (187 aa).

110–118 (EDVVTTGGS) serves as a coordination point for 5-phospho-alpha-D-ribose 1-diphosphate. The orotate site is built by Thr114 and Arg142.

This sequence belongs to the purine/pyrimidine phosphoribosyltransferase family. PyrE subfamily. As to quaternary structure, homodimer. Mg(2+) is required as a cofactor.

It carries out the reaction orotidine 5'-phosphate + diphosphate = orotate + 5-phospho-alpha-D-ribose 1-diphosphate. It participates in pyrimidine metabolism; UMP biosynthesis via de novo pathway; UMP from orotate: step 1/2. Functionally, catalyzes the transfer of a ribosyl phosphate group from 5-phosphoribose 1-diphosphate to orotate, leading to the formation of orotidine monophosphate (OMP). This is Orotate phosphoribosyltransferase from Thermotoga maritima (strain ATCC 43589 / DSM 3109 / JCM 10099 / NBRC 100826 / MSB8).